Reading from the N-terminus, the 228-residue chain is 2,3-bisphosphoglycerate-dependent phosphoglycerate mutase (228 aa).

Substrate is bound by residues 8–15, 21–22, arginine 58, 111–114, lysine 122, 138–139, and 182–183; these read RHGQSVWN, SG, ERMY, RR, and GN. Histidine 9 functions as the Tele-phosphohistidine intermediate in the catalytic mechanism. Glutamate 111 functions as the Proton donor/acceptor in the catalytic mechanism.

The protein belongs to the phosphoglycerate mutase family. BPG-dependent PGAM subfamily.

It catalyses the reaction (2R)-2-phosphoglycerate = (2R)-3-phosphoglycerate. The protein operates within carbohydrate degradation; glycolysis; pyruvate from D-glyceraldehyde 3-phosphate: step 3/5. Its function is as follows. Catalyzes the interconversion of 2-phosphoglycerate and 3-phosphoglycerate. This Chlamydia pneumoniae (Chlamydophila pneumoniae) protein is 2,3-bisphosphoglycerate-dependent phosphoglycerate mutase.